The following is a 281-amino-acid chain: Proteasome subunit beta 2 (281 aa).

A propeptide spans 1–53 (MEANTRSTGRLPAAFLTPGSSSFMDFLSEHQPEILPGNRQLPPTQGVIEAPHG) (removed in mature form; by autocatalysis). Thr-54 (nucleophile) is an active-site residue.

Belongs to the peptidase T1B family. In terms of assembly, the 20S proteasome core is composed of 14 alpha and 14 beta subunits that assemble into four stacked heptameric rings, resulting in a barrel-shaped structure. The two inner rings, each composed of seven catalytic beta subunits, are sandwiched by two outer rings, each composed of seven alpha subunits. The catalytic chamber with the active sites is on the inside of the barrel. Has a gated structure, the ends of the cylinder being occluded by the N-termini of the alpha-subunits. Is capped by the proteasome-associated ATPase, ARC.

The protein localises to the cytoplasm. It carries out the reaction Cleavage of peptide bonds with very broad specificity.. It functions in the pathway protein degradation; proteasomal Pup-dependent pathway. With respect to regulation, the formation of the proteasomal ATPase ARC-20S proteasome complex, likely via the docking of the C-termini of ARC into the intersubunit pockets in the alpha-rings, may trigger opening of the gate for substrate entry. Interconversion between the open-gate and close-gate conformations leads to a dynamic regulation of the 20S proteasome proteolysis activity. Its function is as follows. Component of the proteasome core, a large protease complex with broad specificity involved in protein degradation. The chain is Proteasome subunit beta 2 from Streptomyces avermitilis (strain ATCC 31267 / DSM 46492 / JCM 5070 / NBRC 14893 / NCIMB 12804 / NRRL 8165 / MA-4680).